The primary structure comprises 62 residues: Paralithocin 1 (62 aa).

A signal peptide spans 1–23; the sequence is MGPMKVLLVLLVVMVAAPHIADA. 4 disulfide bridges follow: Cys29/Cys55, Cys33/Cys51, Cys37/Cys49, and Cys42/Cys52. Tyr61 carries the post-translational modification Tyrosine amide; partial.

This sequence belongs to the paralithocin family. In terms of processing, the amidated form is probably the active form.

Has weak antibacterial activity, mainly against marine Gram-positive bacteria like C.maltaromaticum (MIC=200 uM), C.mobile (MIC=100 uM), C.divergens (MIC=200 uM) and C.funditum (MIC=200 uM) but also against C.glutamicum (MIC=50 uM). Has very little or no activity against Gram-negative bacteria. In Paralithodes camtschaticus (Red king crab), this protein is Paralithocin 1.